A 151-amino-acid polypeptide reads, in one-letter code: uncharacterized protein (151 aa).

Residues 48-151 (RPPGWQPPVN…SKFDHTRKKF (104 aa)) are disordered. Residues 55 to 77 (PVNTGPTSPVSINASNAAPSNLK) are compositionally biased toward polar residues. Composition is skewed to low complexity over residues 85 to 105 (PRRL…RLPS) and 123 to 141 (KSPS…SLLR).

This is an uncharacterized protein from Schizosaccharomyces pombe (strain 972 / ATCC 24843) (Fission yeast).